The chain runs to 557 residues: Proline--tRNA ligase (557 aa).

It belongs to the class-II aminoacyl-tRNA synthetase family. ProS type 1 subfamily. In terms of assembly, homodimer.

The protein resides in the cytoplasm. It catalyses the reaction tRNA(Pro) + L-proline + ATP = L-prolyl-tRNA(Pro) + AMP + diphosphate. In terms of biological role, catalyzes the attachment of proline to tRNA(Pro) in a two-step reaction: proline is first activated by ATP to form Pro-AMP and then transferred to the acceptor end of tRNA(Pro). As ProRS can inadvertently accommodate and process non-cognate amino acids such as alanine and cysteine, to avoid such errors it has two additional distinct editing activities against alanine. One activity is designated as 'pretransfer' editing and involves the tRNA(Pro)-independent hydrolysis of activated Ala-AMP. The other activity is designated 'posttransfer' editing and involves deacylation of mischarged Ala-tRNA(Pro). The misacylated Cys-tRNA(Pro) is not edited by ProRS. The polypeptide is Proline--tRNA ligase (Baumannia cicadellinicola subsp. Homalodisca coagulata).